The chain runs to 591 residues: L-fucose isomerase (591 aa).

Catalysis depends on proton acceptor residues glutamate 337 and aspartate 361. Mn(2+)-binding residues include glutamate 337, aspartate 361, and histidine 528.

The protein belongs to the L-fucose isomerase family. As to quaternary structure, homohexamer. Mn(2+) is required as a cofactor.

The protein resides in the cytoplasm. The enzyme catalyses L-fucose = L-fuculose. It functions in the pathway carbohydrate degradation; L-fucose degradation; L-lactaldehyde and glycerone phosphate from L-fucose: step 1/3. Converts the aldose L-fucose into the corresponding ketose L-fuculose. In Escherichia coli O6:H1 (strain CFT073 / ATCC 700928 / UPEC), this protein is L-fucose isomerase.